The following is a 197-amino-acid chain: Lipoprotein signal peptidase (197 aa).

Transmembrane regions (helical) follow at residues 73 to 93 (SNAI…YLMI) and 97 to 117 (TIGS…NLID). Residues aspartate 126 and aspartate 144 contribute to the active site. The chain crosses the membrane as a helical span at residues 135–155 (YSFPVFNLADCFITIGVIILI).

This sequence belongs to the peptidase A8 family.

It localises to the cell inner membrane. The catalysed reaction is Release of signal peptides from bacterial membrane prolipoproteins. Hydrolyzes -Xaa-Yaa-Zaa-|-(S,diacylglyceryl)Cys-, in which Xaa is hydrophobic (preferably Leu), and Yaa (Ala or Ser) and Zaa (Gly or Ala) have small, neutral side chains.. Its pathway is protein modification; lipoprotein biosynthesis (signal peptide cleavage). Functionally, this protein specifically catalyzes the removal of signal peptides from prolipoproteins. This is Lipoprotein signal peptidase from Rickettsia felis (strain ATCC VR-1525 / URRWXCal2) (Rickettsia azadi).